The primary structure comprises 66 residues: Large ribosomal subunit protein bL35 (66 aa).

Residues 1–16 (MPKMKTHKGSAKRFKK) are compositionally biased toward basic residues. The segment at 1-24 (MPKMKTHKGSAKRFKKTGTGQLKR) is disordered.

It belongs to the bacterial ribosomal protein bL35 family.

This chain is Large ribosomal subunit protein bL35, found in Anoxybacillus flavithermus (strain DSM 21510 / WK1).